A 48-amino-acid chain; its full sequence is Putative ATP synthase protein 8-like protein (48 aa).

Residues 17–37 (GFLVILLTLLLLSYAFLSMIL) traverse the membrane as a helical segment.

It belongs to the ATPase protein 8 family.

It localises to the membrane. This is Putative ATP synthase protein 8-like protein from Eremothecium gossypii (strain ATCC 10895 / CBS 109.51 / FGSC 9923 / NRRL Y-1056) (Yeast).